The chain runs to 420 residues: Tryptophan--tRNA ligase (420 aa).

The short motif at 72–80 is the 'HIGH' region element; it reads PSGLPHFGH. A 'KMSKS' region motif is present at residues 308–312; the sequence is KMSSS.

The protein belongs to the class-I aminoacyl-tRNA synthetase family.

The protein localises to the cytoplasm. It carries out the reaction tRNA(Trp) + L-tryptophan + ATP = L-tryptophyl-tRNA(Trp) + AMP + diphosphate + H(+). In Archaeoglobus fulgidus (strain ATCC 49558 / DSM 4304 / JCM 9628 / NBRC 100126 / VC-16), this protein is Tryptophan--tRNA ligase.